Reading from the N-terminus, the 107-residue chain is NADH-quinone oxidoreductase subunit K (107 aa).

3 consecutive transmembrane segments (helical) span residues 9-29, 36-56, and 68-88; these read IGVN…MFAV, IVIL…FLTF, and FSLF…AIVI.

This sequence belongs to the complex I subunit 4L family. As to quaternary structure, NDH-1 is composed of 14 different subunits. Subunits NuoA, H, J, K, L, M, N constitute the membrane sector of the complex.

Its subcellular location is the cell inner membrane. The catalysed reaction is a quinone + NADH + 5 H(+)(in) = a quinol + NAD(+) + 4 H(+)(out). Functionally, NDH-1 shuttles electrons from NADH, via FMN and iron-sulfur (Fe-S) centers, to quinones in the respiratory chain. The immediate electron acceptor for the enzyme in this species is believed to be a menaquinone. Couples the redox reaction to proton translocation (for every two electrons transferred, four hydrogen ions are translocated across the cytoplasmic membrane), and thus conserves the redox energy in a proton gradient. In Chlorobaculum tepidum (strain ATCC 49652 / DSM 12025 / NBRC 103806 / TLS) (Chlorobium tepidum), this protein is NADH-quinone oxidoreductase subunit K.